A 366-amino-acid chain; its full sequence is Probable dual-specificity RNA methyltransferase RlmN (366 aa).

The Proton acceptor role is filled by Glu-108. The 239-residue stretch at 114–352 (YSDRSTLCIS…CTVRDTKGQE (239 aa)) folds into the Radical SAM core domain. The cysteines at positions 121 and 357 are disulfide-linked. [4Fe-4S] cluster is bound by residues Cys-128, Cys-132, and Cys-135. S-adenosyl-L-methionine is bound by residues 178-179 (GE), Ser-212, 235-237 (SLH), and Asn-314. Residue Cys-357 is the S-methylcysteine intermediate of the active site.

Belongs to the radical SAM superfamily. RlmN family. [4Fe-4S] cluster is required as a cofactor.

Its subcellular location is the cytoplasm. It catalyses the reaction adenosine(2503) in 23S rRNA + 2 reduced [2Fe-2S]-[ferredoxin] + 2 S-adenosyl-L-methionine = 2-methyladenosine(2503) in 23S rRNA + 5'-deoxyadenosine + L-methionine + 2 oxidized [2Fe-2S]-[ferredoxin] + S-adenosyl-L-homocysteine. It carries out the reaction adenosine(37) in tRNA + 2 reduced [2Fe-2S]-[ferredoxin] + 2 S-adenosyl-L-methionine = 2-methyladenosine(37) in tRNA + 5'-deoxyadenosine + L-methionine + 2 oxidized [2Fe-2S]-[ferredoxin] + S-adenosyl-L-homocysteine. Its function is as follows. Specifically methylates position 2 of adenine 2503 in 23S rRNA and position 2 of adenine 37 in tRNAs. The chain is Probable dual-specificity RNA methyltransferase RlmN from Corynebacterium glutamicum (strain ATCC 13032 / DSM 20300 / JCM 1318 / BCRC 11384 / CCUG 27702 / LMG 3730 / NBRC 12168 / NCIMB 10025 / NRRL B-2784 / 534).